Consider the following 548-residue polypeptide: Putative F-box protein At1g33020 (548 aa).

The 50-residue stretch at 4 to 53 folds into the F-box domain; the sequence is AENLDSIPTDLILEIFSRMSTKSIGRCRCVSKLWKSMLGHPYFTELFLTR. The disordered stretch occupies residues 380-404; sequence KPISPPKQKPKPPSTETSSREDHQG. The span at 382 to 392 shows a compositional bias: pro residues; that stretch reads ISPPKQKPKPP.

The protein is Putative F-box protein At1g33020 of Arabidopsis thaliana (Mouse-ear cress).